A 97-amino-acid polypeptide reads, in one-letter code: Citrate lyase acyl carrier protein (97 aa).

Ser-14 is subject to O-(phosphoribosyl dephospho-coenzyme A)serine.

This sequence belongs to the CitD family. In terms of assembly, oligomer with a subunit composition of (alpha,beta,gamma)6.

The protein resides in the cytoplasm. Its function is as follows. Covalent carrier of the coenzyme of citrate lyase. In Enterobacter sp. (strain 638), this protein is Citrate lyase acyl carrier protein.